We begin with the raw amino-acid sequence, 395 residues long: Flap endonuclease 1 (395 aa).

The interval 1-104 is N-domain; it reads MGIKHLYQVI…GELAKRFMRK (104 aa). Asp-34 lines the Mg(2+) pocket. 2 residues coordinate DNA: Arg-47 and Arg-70. Residues Asp-86, Glu-158, Glu-160, Asp-179, and Asp-181 each contribute to the Mg(2+) site. Positions 122-253 are I-domain; the sequence is DVEKFSRRTV…NTALKLIRDH (132 aa). Residue Glu-158 participates in DNA binding. Gly-231 and Asp-233 together coordinate DNA. Asp-233 is a binding site for Mg(2+). Positions 341 to 349 are interaction with PCNA; it reads QQSRLEGFF. The segment covering 357–389 has biased composition (basic and acidic residues); the sequence is QEKATLKRKHEEKLELQKKKKKEEAKAKKEAKS. Positions 357-395 are disordered; that stretch reads QEKATLKRKHEEKLELQKKKKKEEAKAKKEAKSKPRGAV.

This sequence belongs to the XPG/RAD2 endonuclease family. FEN1 subfamily. Interacts with PCNA. Three molecules of FEN1 bind to one PCNA trimer with each molecule binding to one PCNA monomer. PCNA stimulates the nuclease activity without altering cleavage specificity. Mg(2+) serves as cofactor. Phosphorylated. Phosphorylation upon DNA damage induces relocalization to the nuclear plasma.

The protein resides in the nucleus. Its subcellular location is the nucleolus. The protein localises to the nucleoplasm. It is found in the mitochondrion. Its function is as follows. Structure-specific nuclease with 5'-flap endonuclease and 5'-3' exonuclease activities involved in DNA replication and repair. During DNA replication, cleaves the 5'-overhanging flap structure that is generated by displacement synthesis when DNA polymerase encounters the 5'-end of a downstream Okazaki fragment. It enters the flap from the 5'-end and then tracks to cleave the flap base, leaving a nick for ligation. Also involved in the long patch base excision repair (LP-BER) pathway, by cleaving within the apurinic/apyrimidinic (AP) site-terminated flap. Acts as a genome stabilization factor that prevents flaps from equilibrating into structures that lead to duplications and deletions. Also possesses 5'-3' exonuclease activity on nicked or gapped double-stranded DNA, and exhibits RNase H activity. Also involved in replication and repair of rDNA and in repairing mitochondrial DNA. The polypeptide is Flap endonuclease 1 (Ajellomyces dermatitidis (strain ER-3 / ATCC MYA-2586) (Blastomyces dermatitidis)).